We begin with the raw amino-acid sequence, 417 residues long: Peptide chain release factor subunit 1 (417 aa).

This sequence belongs to the eukaryotic release factor 1 family. Heterodimer of two subunits, one of which binds GTP.

The protein resides in the cytoplasm. Functionally, directs the termination of nascent peptide synthesis (translation) in response to the termination codons UAA, UAG and UGA. This is Peptide chain release factor subunit 1 (prf1) from Thermoplasma acidophilum (strain ATCC 25905 / DSM 1728 / JCM 9062 / NBRC 15155 / AMRC-C165).